A 163-amino-acid polypeptide reads, in one-letter code: Augmin complex subunit wac (163 aa).

Residues 86 to 115 (ELQRILSSIEEATRDVVMLERFNAAAEERL) adopt a coiled-coil conformation.

Component of the augmin complex composed of dgt2, dgt3, dgt4, dgt5, dgt6, msd1, msd5 and wac. The complex interacts directly or indirectly with microtubules and is required for centrosome-independent generation of spindle microtubules. wac interacts directly (via coiled coil) with dgt2. In terms of tissue distribution, in adult females, detected only in the abdomen with no expression in the head or thorax (at protein level).

The protein localises to the cytoplasm. It is found in the cytoskeleton. It localises to the spindle. Its subcellular location is the spindle pole. Functionally, as part of the augmin complex, plays a role in centrosome-independent generation of spindle microtubules. The complex is required for mitotic spindle assembly through its involvement in localizing gamma-tubulin to spindle microtubules. wac is dispensable for somatic mitosis and for assembly of spindle microtubules in oocytes during female meiosis but is required during female meiosis for chromosome alignment and segregation. It is required for microtubule assembly near spindle poles in oocytes. It is also required for acentrosomal microtubule nucleation and meiotic spindle formation during male meiosis. wac binds to microtubules in vitro. The chain is Augmin complex subunit wac from Drosophila melanogaster (Fruit fly).